We begin with the raw amino-acid sequence, 109 residues long: Small ribosomal subunit protein uS10 (109 aa).

The protein belongs to the universal ribosomal protein uS10 family. As to quaternary structure, part of the 30S ribosomal subunit.

In terms of biological role, involved in the binding of tRNA to the ribosomes. This Nanoarchaeum equitans (strain Kin4-M) protein is Small ribosomal subunit protein uS10.